We begin with the raw amino-acid sequence, 133 residues long: Nickel-responsive regulator (133 aa).

Histidine 76, histidine 87, histidine 89, and cysteine 95 together coordinate Ni(2+).

This sequence belongs to the transcriptional regulatory CopG/NikR family. In terms of assembly, homotetramer. Ni(2+) serves as cofactor.

Transcriptional repressor of the nikABCDE operon. Is active in the presence of excessive concentrations of intracellular nickel. The sequence is that of Nickel-responsive regulator from Salmonella choleraesuis (strain SC-B67).